The chain runs to 183 residues: MTANAQQLQFIKDSIETIPDYPKEGILFRDITTLLDNPAAYQATIDLLVEHYQGQGITKVVGTEARGFLFGAPVALRLGVGFVPVRKKGKLPRETLSETYDLEYGTDTLEIHKDSITDKDKVLMVDDLLATGGTIEATARLIRRLGGTVTEAAFIICLPDLGGIERLEKEGIHSFTLVNFPGH.

The protein belongs to the purine/pyrimidine phosphoribosyltransferase family. As to quaternary structure, homodimer.

The protein resides in the cytoplasm. It catalyses the reaction AMP + diphosphate = 5-phospho-alpha-D-ribose 1-diphosphate + adenine. It functions in the pathway purine metabolism; AMP biosynthesis via salvage pathway; AMP from adenine: step 1/1. Its function is as follows. Catalyzes a salvage reaction resulting in the formation of AMP, that is energically less costly than de novo synthesis. The protein is Adenine phosphoribosyltransferase of Proteus mirabilis (strain HI4320).